Reading from the N-terminus, the 1208-residue chain is Urease accessory protein 2 (1208 aa).

2 coiled-coil regions span residues 187-362 and 400-469; these read RDKI…EKAA and IKAL…MHEQ. The 111-residue stretch at 523–633 folds into the SMC hinge domain; sequence DGVFGPLYDL…ICEDLQTAAH (111 aa). 2 coiled-coil regions span residues 688-771 and 817-903; these read HIEV…YEEE and NRLE…VQTQ. The disordered stretch occupies residues 748–773; the sequence is ESSLEEAEGASRDAKAKRASYEEELR. Basic and acidic residues predominate over residues 756–773; sequence GASRDAKAKRASYEEELR.

The protein belongs to the SMC family. SMC3 subfamily. In terms of assembly, component of cohesin complexes.

It localises to the nucleus. Functionally, central component of cohesin, a complex required for chromosome cohesion during the cell cycle. The cohesin complex may form a large proteinaceous ring within which sister chromatids can be trapped. At anaphase, the complex is cleaved and dissociates from chromatin, allowing sister chromatids to segregate. Cohesion is coupled to DNA replication and is involved in DNA repair. The cohesin complex also plays an important role in spindle pole assembly during mitosis and in chromosomes movement. Is unrelated to urease function in C.neoformans. This chain is Urease accessory protein 2, found in Cryptococcus neoformans var. grubii serotype A (strain H99 / ATCC 208821 / CBS 10515 / FGSC 9487) (Filobasidiella neoformans var. grubii).